A 299-amino-acid chain; its full sequence is Dye-decolorizing peroxidase YfeX (299 aa).

Aspartate 143 (proton acceptor) is an active-site residue. Histidine 215 serves as a coordination point for heme.

It belongs to the DyP-type peroxidase family. Requires heme b as cofactor.

The protein localises to the cytoplasm. Has both general peroxidase activity and dye-decolorizing activity. Can catalyze the oxidation of both protoporphyrinogen IX and coproporphyrinogen III to their corresponding porphyrins. Also efficiently decolorizes the dyes alizarin red and Cibacron blue F3GA. The protein is Dye-decolorizing peroxidase YfeX (yfeX) of Escherichia coli (strain K12).